The following is a 650-amino-acid chain: MHNSTDKSVKERFLDLLSEQFNTKEALATEIINLESILELPKGTEHFVSDLHGEFHSFQHVLRNGSGNVRSKINDIFQDTLTRKEINEFSALVYYPEEKLQLIKNSFSSKSELNEWYITTINRLIKLITYASSKYTRTKLRKSLPENYVFIVEELLYKSNKYNNKHSYYETLIKQIIELEQSDDLIIGLSFTVQHLVVNHLHVVGDIYDRGPEPDKIMETLIDYPSVDIQWGNHDVLWIGAYAGSKVCLANLLRICARYDNLDIIEDAYGINLRPLLTLADKYYDGSNPAFRPKNAEGLSELELEQITKLHQAIAIIQFKLEAPIIKRRPAFEMEERLVLEKIDYDKNEATLYGKTYPLEHTCFQTVDPNDPNKLTDEEADVIDKLLLSVQQSEKLKRHMTFLMQKGKLYLPYNGNLLIHGCIPVDEQGEMESMVIDGVKCYGRDLLDHFEEYVRIAFDHKDIQDDLATDLVWYLWTGKYSSLFGKRAMTTFERYFIKDKTAHKETKNPYYYLREDVDMCKKMLKDFGLDPEQGHIINGHTPVKEIDGEDPIKADGKMIVIDGGFSKAYQSTTGIAGYTLLYNSFGMQLVAHQHFNSKKHVLLNGADELSIRRVVDKELQRKKIRDTNTGHEIQAQIDILKELMHDRFVN.

It belongs to the FBPase class 3 family. Mn(2+) serves as cofactor.

The enzyme catalyses beta-D-fructose 1,6-bisphosphate + H2O = beta-D-fructose 6-phosphate + phosphate. The protein operates within carbohydrate biosynthesis; gluconeogenesis. This Staphylococcus xylosus protein is Fructose-1,6-bisphosphatase class 3.